Here is a 1057-residue protein sequence, read N- to C-terminus: Exportin-1 (1057 aa).

Positions Ala-36–Arg-102 constitute an Importin N-terminal domain. 11 HEAT repeats span residues Ala-239–Gly-275, Ala-281–Thr-321, Asn-462–Lys-501, Arg-506–Arg-544, Lys-551–Arg-588, Glu-596–Ala-633, Lys-739–Thr-776, Thr-781–Ser-818, Gln-855–Lys-892, Lys-902–Phe-925, and Ala-926–Glu-965.

Belongs to the exportin family. Component of a nuclear export receptor complex.

It is found in the nucleus. Its subcellular location is the cytoplasm. The protein localises to the perinuclear region. Its function is as follows. Mediates the nuclear export of cellular proteins (cargos) bearing a leucine-rich nuclear export signal (NES). The sequence is that of Exportin-1 (xpo1) from Dictyostelium discoideum (Social amoeba).